Consider the following 239-residue polypeptide: Tumor protein p53-inducible nuclear protein 1 (239 aa).

The LIR motif lies at glutamate 25–isoleucine 37.

Interacts with p53/TP53 and HIPK2. Interacts with PRKCG, GABARAP, GABARAPL1, GABARAPL2, MAP1LC3A, MAP1LC3B and MAP1LC3C. Ubiquitously expressed with highest levels in the thymus.

Its subcellular location is the cytoplasm. It localises to the cytosol. It is found in the nucleus. The protein resides in the PML body. The protein localises to the cytoplasmic vesicle. Its subcellular location is the autophagosome. Antiproliferative and proapoptotic protein involved in cell stress response which acts as a dual regulator of transcription and autophagy. Acts as a positive regulator of autophagy. In response to cellular stress or activation of autophagy, relocates to autophagosomes where it interacts with autophagosome-associated proteins GABARAP, GABARAPL1/L2, MAP1LC3A/B/C and regulates autophagy. Acts as an antioxidant and plays a major role in p53/TP53-driven oxidative stress response. Possesses both a p53/TP53-independent intracellular reactive oxygen species (ROS) regulatory function and a p53/TP53-dependent transcription regulatory function. Positively regulates p53/TP53 and p73/TP73 and stimulates their capacity to induce apoptosis and regulate cell cycle. In response to double-strand DNA breaks, promotes p53/TP53 phosphorylation on 'Ser-46' and subsequent apoptosis. Acts as a tumor suppressor by inducing cell death by an autophagy and caspase-dependent mechanism. Can reduce cell migration by regulating the expression of SPARC. The sequence is that of Tumor protein p53-inducible nuclear protein 1 (Trp53inp1) from Mus musculus (Mouse).